The primary structure comprises 436 residues: MTVYHFVGIKGTGMSSLAQILHDMKHTVQGSDYEKRFFTQTALEKRNISILPFDKSNVKEGQVIIAGNAFPDTHEEIVAAKELNIPVHRYHHFLGDLMNQYTSVAVTGAHGKTSTTGLLAHVMQGAHPTSYLIGDGTGHGVENSKYFVFEACEYRRHFLSYNPDYAIMTNIDFDHPDYFTDINDVFSAFQEMALQVKKGIIACGDDEELQKIQAKVPVIFYGFGEDNDFQARNIQKRTDGTIFDVFVRNTYYDTFKITGYGNHSVLNALAVIALCHYENVDVEAVKHQLTTFEGVKRRFNEKPMGEQVIIDDYAHHPTEINATIEAARQKHPEREIVAVFQPHTFSRTEKFLDEFAESLSKADQVYLCDIFGSARENKGELTIEDLQKRIDGAELITDTTTDVLKKHKNGVLIFMGAGDIQKFEAAYVKEVQVAEK.

108 to 114 (GAHGKTS) contributes to the ATP binding site.

The protein belongs to the MurCDEF family.

It localises to the cytoplasm. It catalyses the reaction UDP-N-acetyl-alpha-D-muramate + L-alanine + ATP = UDP-N-acetyl-alpha-D-muramoyl-L-alanine + ADP + phosphate + H(+). It participates in cell wall biogenesis; peptidoglycan biosynthesis. Its function is as follows. Cell wall formation. In Bacillus cereus (strain ZK / E33L), this protein is UDP-N-acetylmuramate--L-alanine ligase.